A 219-amino-acid chain; its full sequence is Proteasome subunit beta type-9 (219 aa).

Positions 1–20 (MLRAGAPTGDLPRAGEVHTG) are cleaved as a propeptide — removed in mature form. The active-site Nucleophile is the threonine 21. Residues lysine 53 and lysine 109 each carry the N6-acetyllysine modification.

Belongs to the peptidase T1B family. The 26S proteasome consists of a 20S proteasome core and two 19S regulatory subunits. The 20S proteasome core is composed of 28 subunits that are arranged in four stacked rings, resulting in a barrel-shaped structure. The two end rings are each formed by seven alpha subunits, and the two central rings are each formed by seven beta subunits. The catalytic chamber with the active sites is on the inside of the barrel. Component of the immunoproteasome, where it displaces the equivalent housekeeping subunit PSMB6. Component of the spermatoproteasome, a form of the proteasome specifically found in testis. As to quaternary structure, (Microbial infection) Interacts with HIV-1 TAT protein. Autocleaved. The resulting N-terminal Thr residue of the mature subunit is responsible for the nucleophile proteolytic activity.

It is found in the cytoplasm. Its subcellular location is the nucleus. It carries out the reaction Cleavage of peptide bonds with very broad specificity.. In terms of biological role, the proteasome is a multicatalytic proteinase complex which is characterized by its ability to cleave peptides with Arg, Phe, Tyr, Leu, and Glu adjacent to the leaving group at neutral or slightly basic pH. The proteasome has an ATP-dependent proteolytic activity. This subunit is involved in antigen processing to generate class I binding peptides. Replacement of PSMB6 by PSMB9 increases the capacity of the immunoproteasome to cleave model peptides after hydrophobic and basic residues. The protein is Proteasome subunit beta type-9 (PSMB9) of Homo sapiens (Human).